A 567-amino-acid polypeptide reads, in one-letter code: Probable serine/threonine-protein kinase WNK6 (567 aa).

Positions 28-285 (IRYKEVIGKG…AKELLLDPFL (258 aa)) constitute a Protein kinase domain. ATP is bound by residues 108-111 (TELF) and K158. D175 acts as the Proton acceptor in catalysis. Positions 499 to 509 (VDATKGEDKSS) are enriched in basic and acidic residues. The segment at 499–528 (VDATKGEDKSSIQEVEEATEPVSLEEEERL) is disordered. Positions 512 to 525 (EVEEATEPVSLEEE) are enriched in acidic residues. A coiled-coil region spans residues 519-553 (PVSLEEEERLRQELEEIEAKYQEDMKEIATKREEA).

The protein belongs to the protein kinase superfamily. Ser/Thr protein kinase family. WNK subfamily.

It carries out the reaction L-seryl-[protein] + ATP = O-phospho-L-seryl-[protein] + ADP + H(+). The enzyme catalyses L-threonyl-[protein] + ATP = O-phospho-L-threonyl-[protein] + ADP + H(+). In terms of biological role, may regulate flowering time by modulating the photoperiod pathway. In Arabidopsis thaliana (Mouse-ear cress), this protein is Probable serine/threonine-protein kinase WNK6 (WNK6).